The following is a 315-amino-acid chain: UDP-3-O-acyl-N-acetylglucosamine deacetylase (315 aa).

His78, His235, and Asp239 together coordinate Zn(2+). Residue His262 is the Proton donor of the active site.

This sequence belongs to the LpxC family. Zn(2+) serves as cofactor.

The catalysed reaction is a UDP-3-O-[(3R)-3-hydroxyacyl]-N-acetyl-alpha-D-glucosamine + H2O = a UDP-3-O-[(3R)-3-hydroxyacyl]-alpha-D-glucosamine + acetate. It participates in glycolipid biosynthesis; lipid IV(A) biosynthesis; lipid IV(A) from (3R)-3-hydroxytetradecanoyl-[acyl-carrier-protein] and UDP-N-acetyl-alpha-D-glucosamine: step 2/6. Its function is as follows. Catalyzes the hydrolysis of UDP-3-O-myristoyl-N-acetylglucosamine to form UDP-3-O-myristoylglucosamine and acetate, the committed step in lipid A biosynthesis. This Syntrophus aciditrophicus (strain SB) protein is UDP-3-O-acyl-N-acetylglucosamine deacetylase.